The chain runs to 234 residues: Glucosamine-6-phosphate deaminase (234 aa).

Catalysis depends on aspartate 62, which acts as the Proton acceptor; for enolization step. Residue asparagine 128 is the For ring-opening step of the active site. Histidine 130 acts as the Proton acceptor; for ring-opening step in catalysis. Glutamate 135 (for ring-opening step) is an active-site residue.

It belongs to the glucosamine/galactosamine-6-phosphate isomerase family. NagB subfamily.

It carries out the reaction alpha-D-glucosamine 6-phosphate + H2O = beta-D-fructose 6-phosphate + NH4(+). Its pathway is amino-sugar metabolism; N-acetylneuraminate degradation; D-fructose 6-phosphate from N-acetylneuraminate: step 5/5. Catalyzes the reversible isomerization-deamination of glucosamine 6-phosphate (GlcN6P) to form fructose 6-phosphate (Fru6P) and ammonium ion. The chain is Glucosamine-6-phosphate deaminase from Streptococcus pyogenes serotype M18 (strain MGAS8232).